The chain runs to 181 residues: Adenine phosphoribosyltransferase (181 aa).

Belongs to the purine/pyrimidine phosphoribosyltransferase family. Homodimer.

The protein localises to the cytoplasm. The enzyme catalyses AMP + diphosphate = 5-phospho-alpha-D-ribose 1-diphosphate + adenine. Its pathway is purine metabolism; AMP biosynthesis via salvage pathway; AMP from adenine: step 1/1. Its function is as follows. Catalyzes a salvage reaction resulting in the formation of AMP, that is energically less costly than de novo synthesis. This chain is Adenine phosphoribosyltransferase, found in Cytophaga hutchinsonii (strain ATCC 33406 / DSM 1761 / CIP 103989 / NBRC 15051 / NCIMB 9469 / D465).